Here is a 165-residue protein sequence, read N- to C-terminus: MRIDPSTLNLKEKVVFINRVAKVVKGGRNFRFSALVVVGDENGHVGVGMGKAVEIPEAIRKGIEDAKKHLVEVAMVDTTVPHAIQGEFGRGRVLIMPATEGTGVIAGGPVRAVLELAGLKDVRAKSLGSNNPKNMVGATINGLSRLRTAEQIAKLRGKSVEEILG.

Positions 10-73 constitute an S5 DRBM domain; the sequence is LKEKVVFINR…EDAKKHLVEV (64 aa).

This sequence belongs to the universal ribosomal protein uS5 family. As to quaternary structure, part of the 30S ribosomal subunit. Contacts proteins S4 and S8.

With S4 and S12 plays an important role in translational accuracy. In terms of biological role, located at the back of the 30S subunit body where it stabilizes the conformation of the head with respect to the body. This Clostridium novyi (strain NT) protein is Small ribosomal subunit protein uS5.